A 1483-amino-acid chain; its full sequence is ABC multidrug transporter atrA (1483 aa).

Residues 1–19 show a composition bias toward basic and acidic residues; it reads MASHKKSEDPLVVKDRQEQ. The interval 1-92 is disordered; the sequence is MASHKKSEDP…NDPAVDPQGP (92 aa). Asparagine 32 is a glycosylation site (N-linked (GlcNAc...) asparagine). Polar residues predominate over residues 71–82; sequence PTRTSTLATISE. Asparagine 123 and asparagine 322 each carry an N-linked (GlcNAc...) asparagine glycan. The 252-residue stretch at 147-398 folds into the ABC transporter 1 domain; it reads FRIGEMMKNR…FERQGWECPQ (252 aa). A run of 5 helical transmembrane segments spans residues 512–532, 539–559, 595–615, 620–640, and 654–674; these read TVSTVISQIIMALIIGSVFYG, GFTAKGATLFFAVLLNALIAM, IPVKFVIAVVFNLILYFLAGL, GQFFLYLLVTFIVMFVMSAVF, and MGLAGILILALIVYTGFVLPV. An N-linked (GlcNAc...) asparagine glycan is attached at asparagine 718. Residues 759–779 form a helical membrane-spanning segment; that stretch reads FGILIAFLVGFMMIYFIATEL. N-linked (GlcNAc...) asparagine glycosylation is present at asparagine 780. The 244-residue stretch at 840 to 1083 folds into the ABC transporter 2 domain; the sequence is FTWRDVCYDI…LLNYFESNGA (244 aa). 876–883 is an ATP binding site; sequence GVSGAGKT. 2 N-linked (GlcNAc...) asparagine glycosylation sites follow: asparagine 947 and asparagine 1146. A run of 5 helical transmembrane segments spans residues 1179–1199, 1215–1235, 1254–1274, 1293–1313, and 1320–1340; these read YIASKWVLGILSGLFIGFSFF, LFMLCSIFSSLVQQVMPLFVT, AFLIANIIVEIPYQIMMGILT, LVLLLCIQFFIYASTFAHMAI, and ETASAIVVLLFAMSLTFCGVM. The N-linked (GlcNAc...) asparagine glycan is linked to asparagine 1413. Residues 1444–1464 form a helical membrane-spanning segment; the sequence is FGLMWVYIVFNIFLATMLYYT. N-linked (GlcNAc...) asparagine glycosylation is present at asparagine 1471.

The protein belongs to the ABC transporter superfamily. ABCG family. PDR (TC 3.A.1.205) subfamily.

Its subcellular location is the cell membrane. The enzyme catalyses (R)-miconazole(in) + ATP + H2O = (R)-miconazole(out) + ADP + phosphate + H(+). In terms of biological role, pleiotropic ABC efflux transporter involved in the basal level of azole susceptibility. Confers resistance to miconazole and clotrimazole. This is ABC multidrug transporter atrA from Aspergillus oryzae (strain ATCC 42149 / RIB 40) (Yellow koji mold).